Here is a 506-residue protein sequence, read N- to C-terminus: Histidine ammonia-lyase (506 aa).

A cross-link (5-imidazolinone (Ala-Gly)) is located at residues 143–145; it reads ASG. 2,3-didehydroalanine (Ser) is present on Ser144.

It belongs to the PAL/histidase family. Contains an active site 4-methylidene-imidazol-5-one (MIO), which is formed autocatalytically by cyclization and dehydration of residues Ala-Ser-Gly.

The protein resides in the cytoplasm. It carries out the reaction L-histidine = trans-urocanate + NH4(+). It participates in amino-acid degradation; L-histidine degradation into L-glutamate; N-formimidoyl-L-glutamate from L-histidine: step 1/3. This chain is Histidine ammonia-lyase, found in Citrobacter koseri (strain ATCC BAA-895 / CDC 4225-83 / SGSC4696).